We begin with the raw amino-acid sequence, 607 residues long: Cyclic-di-GMP receptor FimW (607 aa).

Positions 323 to 492 (ERTFQRTQGQ…GGTQMGIEMI (170 aa)) are pilZ-like domain. Residues 324–328 (RTFQR) carry the RXXXR motif motif. The D/NXSXXG motif signature appears at 435 to 440 (NHSPGG). The segment covering 568–582 (SQFEYRSAEPVNTPS) has biased composition (polar residues). The disordered stretch occupies residues 568–607 (SQFEYRSAEPVNTPSDKPVTAPVARPPAGEEDFDSLWKSL).

In terms of assembly, monomer in the absence of c-di-GMP. Forms dimers in the presence of c-di-GMP.

The protein resides in the cytoplasm. High-affinity cyclic-di-GMP binding protein that regulates type IV pili (T4P) elongation. Required for T4P-mediated surface attachment and walking motility during the early phases of surface colonization. Not required for twitching motility. Does not bind related nucleotides such as GMP, GDP, GTP or ATP. The sequence is that of Cyclic-di-GMP receptor FimW from Pseudomonas aeruginosa (strain ATCC 15692 / DSM 22644 / CIP 104116 / JCM 14847 / LMG 12228 / 1C / PRS 101 / PAO1).